A 44-amino-acid chain; its full sequence is DNA-directed RNA polymerase subunit Rpo12 (44 aa).

Zn(2+) is bound by residues cysteine 8, cysteine 22, and cysteine 25.

The protein belongs to the archaeal Rpo12/eukaryotic RPC10 RNA polymerase subunit family. As to quaternary structure, part of the RNA polymerase complex. Requires Zn(2+) as cofactor.

The protein localises to the cytoplasm. The catalysed reaction is RNA(n) + a ribonucleoside 5'-triphosphate = RNA(n+1) + diphosphate. Its function is as follows. DNA-dependent RNA polymerase (RNAP) catalyzes the transcription of DNA into RNA using the four ribonucleoside triphosphates as substrates. This chain is DNA-directed RNA polymerase subunit Rpo12, found in Halobacterium salinarum (strain ATCC 29341 / DSM 671 / R1).